We begin with the raw amino-acid sequence, 719 residues long: Probable disease resistance protein At4g14610 (719 aa).

A coiled-coil region spans residues S25–L73. The NB-ARC domain maps to E114–P418. ATP is bound at residue G156 to T163. LRR repeat units follow at residues A400–P421, Q422–F444, and N447–V469.

It belongs to the disease resistance NB-LRR family.

Functionally, probable disease resistance protein. This chain is Probable disease resistance protein At4g14610, found in Arabidopsis thaliana (Mouse-ear cress).